A 382-amino-acid chain; its full sequence is Cholinephosphotransferase 1 (382 aa).

The Cytoplasmic segment spans residues 1–51; the sequence is MPQCECPEPLSAVQLKRLEEHKYSAAGRSLFEPPCQIYWNWLVQQIPTWVA. Residues 52 to 72 form a helical membrane-spanning segment; that stretch reads PNTLTTIGLVINVITTVILVY. Asn-53 contributes to the CDP-choline binding site. The Lumenal segment spans residues 73–82; it reads YSPTATEEVP. The chain crosses the membrane as a helical span at residues 83-107; the sequence is GWAFFLSALGLFIYQSLDAIDGKQA. Mg(2+)-binding residues include Asp-100 and Asp-103. Arg-108 is a binding site for CDP-choline. Residues 108–114 lie on the Cytoplasmic side of the membrane; sequence RRTNSSS. The helical transmembrane segment at 115-139 threads the bilayer; sequence ALGELFDHGCDAVSTVFVAVGTCIC. A Mg(2+)-binding site is contributed by Asp-121. His-122 (proton acceptor) is an active-site residue. Asp-125 is a Mg(2+) binding site. The Lumenal portion of the chain corresponds to 140–149; sequence CGIGAYPNWM. A helical transmembrane segment spans residues 150-168; sequence FFCGFVGMFMFFCAHWQTY. Over 169 to 179 the chain is Cytoplasmic; it reads VSGTLRFGLVD. Residues 180-196 traverse the membrane as a helical segment; the sequence is VTEVQIAIIIMYLLTAF. Residues 197 to 211 lie on the Lumenal side of the membrane; the sequence is TGVSFWEMRVPVLGV. The helical transmembrane segment at 212-237 threads the bilayer; it reads NLQTFPILGIIGGFLYSTYNYFFVIM. Residues 238–254 lie on the Cytoplasmic side of the membrane; that stretch reads NGGVGKNGSTVADTSVL. A helical membrane pass occupies residues 255 to 270; that stretch reads TPGLHIGLILTLAFII. Topologically, residues 271–282 are lumenal; that stretch reads FKKSSSHLFEHH. Residues 283 to 305 traverse the membrane as a helical segment; the sequence is PCLYVLTFGMVIAKISNKLVVAH. The Cytoplasmic portion of the chain corresponds to 306-318; it reads MTKSELHLQDTAF. Residues 319–328 traverse the membrane as a helical segment; that stretch reads IGPGLLFLNQ. Over 329–335 the chain is Lumenal; sequence YFNSYID. Residues 336-365 form a helical membrane-spanning segment; sequence EHIVLWIAMVLSLVDLVRYCTAVCLQIASH. Residues 366–382 are Cytoplasmic-facing; sequence LRIRVFSISPQGHAHKD.

Belongs to the CDP-alcohol phosphatidyltransferase class-I family. Mg(2+) serves as cofactor. The cofactor is Mn(2+).

Its subcellular location is the golgi apparatus membrane. It catalyses the reaction CDP-choline + a 1,2-diacyl-sn-glycerol = a 1,2-diacyl-sn-glycero-3-phosphocholine + CMP + H(+). The catalysed reaction is 1-octadecanoyl-2-(5Z,8Z,11Z,14Z-eicosatetraenoyl)-sn-glycerol + CDP-choline = 1-octadecanoyl-2-(5Z,8Z,11Z,14Z-eicosatetraenoyl)-sn-glycero-3-phosphocholine + CMP + H(+). The enzyme catalyses 1-hexadecanoyl-2-(9Z-octadecenoyl)-sn-glycerol + CDP-choline = 1-hexadecanoyl-2-(9Z-octadecenoyl)-sn-glycero-3-phosphocholine + CMP + H(+). It carries out the reaction 1-hexadecanoyl-2-(4Z,7Z,10Z,13Z,16Z,19Z-docosahexaenoyl)-sn-glycerol + CDP-choline = 1-hexadecanoyl-2-(4Z,7Z,10Z,13Z,16Z,19Z-docosahexaenoyl)-sn-glycero-3-phosphocholine + CMP + H(+). It catalyses the reaction 1,2-dioctanoyl-sn-glycerol + CDP-choline = 1,2-dioctanoyl-sn-glycero-3-phosphocholine + CMP + H(+). The protein operates within phospholipid metabolism; phosphatidylcholine biosynthesis; phosphatidylcholine from phosphocholine: step 2/2. Functionally, catalyzes the final step of de novo phosphatidylcholine (PC) synthesis, i.e. the transfer of choline phosphate from CDP-choline to the free hydroxyl of a diacylglycerol (DAG), producing a PC. It thereby plays a central role in the formation and maintenance of vesicular membranes. The polypeptide is Cholinephosphotransferase 1 (chpt1) (Danio rerio (Zebrafish)).